The primary structure comprises 394 residues: Flagellin B (394 aa).

This sequence belongs to the bacterial flagellin family.

The protein resides in the secreted. It localises to the bacterial flagellum. Its function is as follows. Flagellin is the subunit protein which polymerizes to form the filaments of bacterial flagella. The chain is Flagellin B (flaB) from Rhizobium meliloti (strain 1021) (Ensifer meliloti).